Here is a 239-residue protein sequence, read N- to C-terminus: MTLALRYKRVLLKVSGEALMGEQSFGIDVSVADRIASDIAEVRKMGVEVAIVIGGGNIFRGVAVASHGGDRVTGDHMGMLATAINSLALRTSLTKLGVETVVLSAITMPQICESFSQRKAMSYMNQGKVVIFAGGTGNPFFTTDSAATLRAAEIGADVLLKGTQVDGIYSADPKINSTAKRFDQLTHVEILRLGLSIMDTTAVTLARENNIPIIVYSIHEKGGLTKVLNGTGRFTVVSE.

Position 13–16 (13–16) interacts with ATP; it reads KVSG. Gly55 is a UMP binding site. Residues Gly56 and Arg60 each contribute to the ATP site. Residues Asp75 and 136–143 contribute to the UMP site; that span reads TGNPFFTT. ATP is bound by residues Thr163, Gln164, Tyr169, and Asp172.

It belongs to the UMP kinase family. Homohexamer.

The protein localises to the cytoplasm. The catalysed reaction is UMP + ATP = UDP + ADP. It functions in the pathway pyrimidine metabolism; CTP biosynthesis via de novo pathway; UDP from UMP (UMPK route): step 1/1. Its activity is regulated as follows. Inhibited by UTP. In terms of biological role, catalyzes the reversible phosphorylation of UMP to UDP. The protein is Uridylate kinase of Bartonella bacilliformis (strain ATCC 35685 / KC583 / Herrer 020/F12,63).